The chain runs to 682 residues: MDKLENKSMANYDEYRAVVICASFSDCNQVLTTIKSIVCHNRFIKFYVINNDFPTEWFVSMQKKLAKLDCPIVNARVDASLVSNFKTDISYTVFLRYFVADFVEEEQALYLDCDIVVTRDLSEIFAVDLGSHPLVAVRDLGGEVYFGEQIFNSGVLLINVNYWRENDIAGQLIEMTDNLHDKVTQDDQSILNMFFENRWVELPFPYNCITLHTTFSDYEPEKGLYPPVIHYLPERKPWKEYTQSIYREVWWFYQGLDWSDIQEPVGALTQKMVEGEDDSSLSCLVYTYSCDLLHINYLIQALPSCHFYIAAPVVVAEPITRLLQYPNVSVSSDIAGIPALLESLEAKSQLLLDINAGDEVGDIIARFKSSGKPVFAFDSTVHGQQGQEVFPADNPEVMVQAIEKLGLAEPEERQISVLSIDQSLDYLLEKGASVVRFGDGEMDLIAGRGIPYQEYDPELSARLREMMAMESNERLMICLSDVFTGLERYSIDAQNFWKAHLQHHLADYLEICRAPWYGSTFISRPYIDLEDKTPSAGYFAKLKQLWQDKDLLIVEGLTSRSGVGNDLFDGARSIKRIICPSRNAYSKLEAIKQAVREHADNRLILTMLGPTAKVLVYDLVQEGYRALDIGHIDSEYEWFQMGASHKIKLSHKHTAEHNFDQDIEYRDDQAYDSQIVANLAQE.

Residues 21-26 (CASFSD) and 112-113 (DC) contribute to the UDP site. Positions 112, 114, and 230 each coordinate Mn(2+). 230-236 (HYLPERK) contributes to the UDP binding site.

Belongs to the glycosyltransferase 8 family. As to quaternary structure, part of the accessory SecA2/SecY2 protein translocation apparatus required to export cell wall protein GspB.

Part of the accessory SecA2/SecY2 system specifically required to export GspB, a serine-rich repeat cell wall protein encoded upstream in the same operon. In Streptococcus gordonii, this protein is Probable glycosyl transferase Gly (gly).